A 428-amino-acid chain; its full sequence is Chaperone SurA (428 aa).

Positions 1–13 (MLGALLLSGAVHA) are cleaved as a signal peptide. 2 PpiC domains span residues 164-265 (SEEF…KLLE) and 276-375 (RDEV…EVLG).

It is found in the periplasm. It carries out the reaction [protein]-peptidylproline (omega=180) = [protein]-peptidylproline (omega=0). Functionally, chaperone involved in the correct folding and assembly of outer membrane proteins. Recognizes specific patterns of aromatic residues and the orientation of their side chains, which are found more frequently in integral outer membrane proteins. May act in both early periplasmic and late outer membrane-associated steps of protein maturation. The sequence is that of Chaperone SurA from Pseudomonas syringae pv. tomato (strain ATCC BAA-871 / DC3000).